The primary structure comprises 2201 residues: RNA-directed RNA polymerase L (2201 aa).

The endonuclease stretch occupies residues 26–285; it reads KNIMLAQTQI…VCSKSVEYTF (260 aa). The Mn(2+) site is built by Glu-51, Asp-88, and Glu-101. Lys-114 is an active-site residue. Residues 1156-1352 form the RdRp catalytic domain; sequence LDMKSVVRQS…FLSDRLNKFV (197 aa). Asp-1312 lines the Mg(2+) pocket.

This sequence belongs to the Bunyavirales RNA polymerase family. As to quaternary structure, homomultimer; the oligomeric structure is essential for the polymerase activity. Interacts with nucleoprotein N. Interacts with protein Z; this interaction inhibits viral transcription and replication, Z partially blocks the product exit tunnel for the releasing nascent RNA product. Requires Mn(2+) as cofactor. Mg(2+) is required as a cofactor.

The protein resides in the virion. It localises to the host cytoplasm. The catalysed reaction is RNA(n) + a ribonucleoside 5'-triphosphate = RNA(n+1) + diphosphate. In terms of biological role, RNA-dependent RNA polymerase, which is responsible for the replication and transcription of the viral RNA genome using antigenomic RNA as an intermediate. During transcription, synthesizes subgenomic RNAs and assures their capping by a cap-snatching mechanism, which involves the endonuclease activity cleaving the host capped pre-mRNAs. These short capped RNAs are then used as primers for viral transcription. The 3'-end of subgenomic mRNAs molecules are heterogeneous and not polyadenylated. The replicase function is to direct synthesis of antigenomic and genomic RNA which are encapsidated and non capped. As a consequence of the use of the same enzyme for both transcription and replication, these mechanisms need to be well coordinated. These processes may be regulated by proteins N and Z in a dose-dependent manner. Z protein inhibits the viral polymerase L und thus the viral transcription and RNA synthesis. This Oecomys bicolor (Bicolored arboreal rice rat) protein is RNA-directed RNA polymerase L.